The chain runs to 575 residues: Proline--tRNA ligase (575 aa).

The protein belongs to the class-II aminoacyl-tRNA synthetase family. ProS type 1 subfamily. In terms of assembly, homodimer.

It is found in the cytoplasm. It carries out the reaction tRNA(Pro) + L-proline + ATP = L-prolyl-tRNA(Pro) + AMP + diphosphate. In terms of biological role, catalyzes the attachment of proline to tRNA(Pro) in a two-step reaction: proline is first activated by ATP to form Pro-AMP and then transferred to the acceptor end of tRNA(Pro). As ProRS can inadvertently accommodate and process non-cognate amino acids such as alanine and cysteine, to avoid such errors it has two additional distinct editing activities against alanine. One activity is designated as 'pretransfer' editing and involves the tRNA(Pro)-independent hydrolysis of activated Ala-AMP. The other activity is designated 'posttransfer' editing and involves deacylation of mischarged Ala-tRNA(Pro). The misacylated Cys-tRNA(Pro) is not edited by ProRS. This Saccharophagus degradans (strain 2-40 / ATCC 43961 / DSM 17024) protein is Proline--tRNA ligase.